A 463-amino-acid chain; its full sequence is Putative pentatricopeptide repeat-containing protein At4g17915 (463 aa).

PPR repeat units follow at residues 12–46, 47–81, 82–116, 117–152, 153–186, 187–221, 222–256, 257–291, 292–326, 327–361, 362–392, and 393–427; these read STRL…GVDP, DVVT…GIRP, DVAT…GIYP, DLWS…GLNP, GPDT…RFKP, ELMT…GYTP, NAVT…GYTY, DGYA…GRRH, DIVS…GMKA, DEYT…GIGL, NLVT…MEVK, and DEYT…GIKI.

This sequence belongs to the PPR family. P subfamily.

This Arabidopsis thaliana (Mouse-ear cress) protein is Putative pentatricopeptide repeat-containing protein At4g17915.